The chain runs to 271 residues: Cyclic AMP-dependent transcription factor ATF-1 (271 aa).

The interval 1–61 is disordered; that stretch reads MEDSHKSTTS…QKAHGILARR (61 aa). One can recognise a KID domain in the interval 31–90; that stretch reads QVSSLSESEESQDSSDSIGSSQKAHGILARRPSYRKILKDLSSEDTRGRKGDGENSGVSA. Phosphoserine; by CaMK1, CDK3, RPS6KA4 and RPS6KA5 is present on serine 63. Serine 198 bears the Phosphoserine; by HIPK2 mark. Residues lysine 208 and lysine 215 each participate in a glycyl lysine isopeptide (Lys-Gly) (interchain with G-Cter in SUMO2) cross-link. A bZIP domain is found at 213-271; it reads QLKREIRLMKNREAARECRRKKKEYVKCLENRVAVLENQNKTLIEELKTLKDLYSNKSV. The interval 215–239 is basic motif; it reads KREIRLMKNREAARECRRKKKEYVK. Residues 241–262 form a leucine-zipper region; it reads LENRVAVLENQNKTLIEELKTL.

The protein belongs to the bZIP family. ATF subfamily. Binds DNA as a dimer. Interacts with HIPK2 and CDK3. Interacts with MOTS-c, a peptide produced by the mitochondrially encoded 12S rRNA MT-RNR1; the interaction occurs in the nucleus following metabolic stress. In terms of processing, phosphorylated at Ser-198 by HIPK2 in response to genotoxic stress. This phosphorylation promotes transcription repression of FTH1 and other antioxidant detoxification genes. The CDK3-mediated phosphorylation at Ser-63 promotes its transactivation and transcriptional activities. Phosphorylated at Ser-63 by RPS6KA4 and RPS6KA5 in response to mitogenic or stress stimuli.

The protein resides in the nucleus. In terms of biological role, this protein binds the cAMP response element (CRE) (consensus: 5'-GTGACGT[AC][AG]-3'), a sequence present in many viral and cellular promoters. Binds to the Tax-responsive element (TRE) of HTLV-I. Mediates PKA-induced stimulation of CRE-reporter genes. Represses the expression of FTH1 and other antioxidant detoxification genes. Triggers cell proliferation and transformation. The polypeptide is Cyclic AMP-dependent transcription factor ATF-1 (ATF1) (Homo sapiens (Human)).